The sequence spans 304 residues: GTP cyclohydrolase FolE2 (304 aa).

This sequence belongs to the GTP cyclohydrolase IV family.

It catalyses the reaction GTP + H2O = 7,8-dihydroneopterin 3'-triphosphate + formate + H(+). It participates in cofactor biosynthesis; 7,8-dihydroneopterin triphosphate biosynthesis; 7,8-dihydroneopterin triphosphate from GTP: step 1/1. In terms of biological role, converts GTP to 7,8-dihydroneopterin triphosphate. This chain is GTP cyclohydrolase FolE2, found in Bdellovibrio bacteriovorus (strain ATCC 15356 / DSM 50701 / NCIMB 9529 / HD100).